Consider the following 676-residue polypeptide: Lon-like protease BrxL (676 aa).

It belongs to the BrxL family.

Functionally, BREX systems (bacteriophage exclusion) provide immunity against bacteriophage. Part of a type 1 BREX system. This system allows phage adsorption but prevents phage DNA replication, without degradation of the phage DNA. Methylation of bacterial DNA by PglX probably guides self/non-self discrimination. When the brxA-brxB-brxC-pglX and pglZ-brxL operons are transformed into a susceptible B.subtilis strain (BEST7003) they confer resistance to bacteriophages SPbeta, SP16, Zeta, phi3T and SP02 and partial protection to phages SP01 and SP82G (these include lytic and temperate phage). They do not protect against phages phi105, rho10 or rho14. Additionally confers a very slight reduction in efficiency of plasmid transformation. This Bacillus cereus (strain H3081.97) protein is Lon-like protease BrxL.